Reading from the N-terminus, the 427-residue chain is uncharacterized protein (427 aa).

Residues 135 to 168 (PILKQKLVSLESKVKKIDKEMEKHNDLLKEIQEN) are a coiled coil.

This is an uncharacterized protein from Arabidopsis thaliana (Mouse-ear cress).